The following is a 121-amino-acid chain: LOB domain-containing protein 23 (121 aa).

Residues 4-105 enclose the LOB domain; it reads KRCAACKYLR…NELAKTQAEI (102 aa).

It belongs to the LOB domain-containing protein family.

The protein is LOB domain-containing protein 23 (LBD23) of Arabidopsis thaliana (Mouse-ear cress).